Consider the following 220-residue polypeptide: tRNA (guanine-N(7)-)-methyltransferase (220 aa).

The S-adenosyl-L-methionine site is built by E42, E67, and D122. D122 is an active-site residue. Substrate is bound by residues K126, D158, and 198 to 201 (TEYE).

It belongs to the class I-like SAM-binding methyltransferase superfamily. TrmB family.

It catalyses the reaction guanosine(46) in tRNA + S-adenosyl-L-methionine = N(7)-methylguanosine(46) in tRNA + S-adenosyl-L-homocysteine. The protein operates within tRNA modification; N(7)-methylguanine-tRNA biosynthesis. Functionally, catalyzes the formation of N(7)-methylguanine at position 46 (m7G46) in tRNA. In Mycoplasma capricolum subsp. capricolum (strain California kid / ATCC 27343 / NCTC 10154), this protein is tRNA (guanine-N(7)-)-methyltransferase.